A 356-amino-acid chain; its full sequence is Protein RecA (356 aa).

An ATP-binding site is contributed by 77-84; sequence GPESSGKT.

The protein belongs to the RecA family.

The protein localises to the cytoplasm. Functionally, can catalyze the hydrolysis of ATP in the presence of single-stranded DNA, the ATP-dependent uptake of single-stranded DNA by duplex DNA, and the ATP-dependent hybridization of homologous single-stranded DNAs. It interacts with LexA causing its activation and leading to its autocatalytic cleavage. This Caulobacter vibrioides (strain ATCC 19089 / CIP 103742 / CB 15) (Caulobacter crescentus) protein is Protein RecA.